A 434-amino-acid chain; its full sequence is UDP-glucuronate 4-epimerase 2 (434 aa).

Helical transmembrane passes span 32 to 52 (SVAK…IFFY) and 91 to 111 (GVSV…SAAL). Residue 93 to 124 (SVLVTGAAGFVGTHVSAALKRRGDGVLGLDNF) participates in NAD(+) binding. The Proton acceptor role is filled by Tyr243.

Belongs to the NAD(P)-dependent epimerase/dehydratase family. In terms of assembly, homodimer. In terms of tissue distribution, in roots, leaves, siliques, flowers, pollen and stems.

Its subcellular location is the golgi apparatus. The protein localises to the golgi stack membrane. It carries out the reaction UDP-alpha-D-glucuronate = UDP-alpha-D-galacturonate. Involved in the synthesis of the negatively charged monosaccharide that forms the backbone of pectic cell wall components. This Arabidopsis thaliana (Mouse-ear cress) protein is UDP-glucuronate 4-epimerase 2 (GAE2).